A 301-amino-acid polypeptide reads, in one-letter code: UDP-N-acetylenolpyruvoylglucosamine reductase (301 aa).

An FAD-binding PCMH-type domain is found at 27–194 (RVGGPADVVF…LDAIFEGTPD (168 aa)). R172 is an active-site residue. S223 (proton donor) is an active-site residue. E293 is a catalytic residue.

It belongs to the MurB family. Requires FAD as cofactor.

It is found in the cytoplasm. It carries out the reaction UDP-N-acetyl-alpha-D-muramate + NADP(+) = UDP-N-acetyl-3-O-(1-carboxyvinyl)-alpha-D-glucosamine + NADPH + H(+). Its pathway is cell wall biogenesis; peptidoglycan biosynthesis. Cell wall formation. The chain is UDP-N-acetylenolpyruvoylglucosamine reductase from Caulobacter vibrioides (strain NA1000 / CB15N) (Caulobacter crescentus).